The sequence spans 84 residues: Cell division topological specificity factor (84 aa).

This sequence belongs to the MinE family.

In terms of biological role, prevents the cell division inhibition by proteins MinC and MinD at internal division sites while permitting inhibition at polar sites. This ensures cell division at the proper site by restricting the formation of a division septum at the midpoint of the long axis of the cell. The chain is Cell division topological specificity factor from Pseudomonas putida (strain W619).